Consider the following 306-residue polypeptide: Pantothenate kinase (306 aa).

91–98 lines the ATP pocket; it reads GSVAVGKS.

Belongs to the prokaryotic pantothenate kinase family.

Its subcellular location is the cytoplasm. It catalyses the reaction (R)-pantothenate + ATP = (R)-4'-phosphopantothenate + ADP + H(+). It functions in the pathway cofactor biosynthesis; coenzyme A biosynthesis; CoA from (R)-pantothenate: step 1/5. In Streptococcus pneumoniae serotype 19F (strain G54), this protein is Pantothenate kinase.